Consider the following 226-residue polypeptide: RNA annealing protein YRA1 (226 aa).

Residues 1–62 (MSANLDKSLD…PIRKNTRAPP (62 aa)) are disordered. Serine 2 is modified (N-acetylserine). Phosphoserine occurs at positions 8 and 100. The 81-residue stretch at 78-158 (VKVNVEGLPR…SRLRLNLIVD (81 aa)) folds into the RRM domain. Residues 173–226 (AMPQKGGNAPRPVKRGPNRKAAMAKSQNKPKREKPAKKSLEDLDKEMADYFEKK) are disordered. Residues 208–226 (AKKSLEDLDKEMADYFEKK) show a composition bias toward basic and acidic residues.

In terms of assembly, component of the transcription/export (TREX) complex, which is at least is formed of SUB2, TEX1 and YRA1 and the THO complex composed of HPR1, MFT1, THO2 and THP1. Interacts with RDS3 and YRA2.

The protein resides in the nucleus. Functionally, RNA-binding RNA annealing protein. May have a role in pre-mRNA metabolism. Component the TREX complex, which operates in coupling transcription elongation to mRNA export. This is RNA annealing protein YRA1 (YRA1) from Saccharomyces cerevisiae (strain ATCC 204508 / S288c) (Baker's yeast).